The following is a 61-amino-acid chain: Small ribosomal subunit protein uS14 (61 aa).

4 residues coordinate Zn(2+): Cys24, Cys27, Cys40, and Cys43.

It belongs to the universal ribosomal protein uS14 family. Zinc-binding uS14 subfamily. Part of the 30S ribosomal subunit. Contacts proteins S3 and S10. Zn(2+) is required as a cofactor.

Its function is as follows. Binds 16S rRNA, required for the assembly of 30S particles and may also be responsible for determining the conformation of the 16S rRNA at the A site. This chain is Small ribosomal subunit protein uS14, found in Kosmotoga olearia (strain ATCC BAA-1733 / DSM 21960 / TBF 19.5.1).